We begin with the raw amino-acid sequence, 2087 residues long: Rho GTPase-activating protein 32 (2087 aa).

The PX; atypical domain maps to 131–245; it reads GSIQLSLSEE…LTWMEIDNKG (115 aa). Residues 259–321 form the SH3 domain; sequence PAVGAAHVIK…PGHCVELINQ (63 aa). Residues 372-567 form the Rho-GAP domain; sequence CDLGEHLLNS…FILNHVDVLF (196 aa). Phosphoserine is present on residues Ser706, Ser709, Ser732, and Ser738. A disordered region spans residues 818–858; that stretch reads FLDSPGYSKDKPSANKKDAETGSSQCQTPGSTASSEPVSPL. A compositionally biased stretch (basic and acidic residues) spans 825 to 837; that stretch reads SKDKPSANKKDAE. Over residues 838–854 the composition is skewed to polar residues; sequence TGSSQCQTPGSTASSEP. Residues Ser852, Ser856, and Ser892 each carry the phosphoserine modification. Residues 927–938 show a composition bias toward low complexity; sequence SNTTAQNASSST. Disordered regions lie at residues 927-1038, 1103-1143, and 1169-1257; these read SNTT…PPKN, PAEQ…EQHH, and VPLD…ENTS. Ser952 carries the phosphoserine modification. 2 stretches are compositionally biased toward low complexity: residues 994 to 1005 and 1019 to 1029; these read SVSSSQSKAVAS and QDSVPVSSVSL. The span at 1124 to 1138 shows a compositional bias: polar residues; sequence TTATGDPTHSNTTES. The span at 1172–1182 shows a compositional bias: basic and acidic residues; the sequence is DSEKSDDHVSF. The segment covering 1188–1203 has biased composition (polar residues); it reads GKNSMPTVSFLDQDQS. Position 1203 is a phosphoserine (Ser1203). Residues 1222 to 1232 are compositionally biased toward basic and acidic residues; the sequence is DKLHHPLEFAD. The segment at 1391–1711 is interaction with GAB2; that stretch reads RVPLLHLRAE…YSYAGLAPRP (321 aa). Arg1523 and Arg1533 each carry asymmetric dimethylarginine. Ser1585 bears the Phosphoserine mark. The interaction with FYN stretch occupies residues 1685–2087; it reads PNRDFAFYNP…QHPETQIHAE (403 aa). Positions 1798–1896 are disordered; sequence PGKTGLLSVA…QFCESKNGPP (99 aa). Basic and acidic residues predominate over residues 1823–1838; that stretch reads GEDRFYRRHPEAEMDR. Over residues 1847–1862 the composition is skewed to polar residues; the sequence is STQPEKPSLPQKQSSL. A compositionally biased stretch (basic and acidic residues) spans 1875 to 1889; that stretch reads PEHRAHQEASHRQFC. Arg2037 is subject to Omega-N-methylarginine.

It belongs to the PX domain-containing GAP family. Interacts with NTRK1 (via cytoplasmic domain); the interaction is independent of the phosphorylation state of NTRK1. Interacts with SHC3 (via SH2 domain). Interacts with RASA1 (via SH3 domain); the interaction is necessary for the Ras activation and cell transforming activities of ARHGAP32. Interacts with GAB1 and GAB2. Interacts with CRK and CRKL. Found in a complex with CRKL and BCAR1; upon EGF stimulation BCAR1 may be replaced by EGFR. Interacts with NCK1 (via SH3 domain); NCK1 recruits phosphorylated BCAR1 to the complex. Isoform 2 interacts with FYN; the interaction appears to be dependent on tyrosine phosphorylation of ARHGAP32. Interacts with EGFR; the interaction requires EGF stimulation and is increased by SHC3. Interacts with CDC42; the interaction requires constitutively active CDC42. Interacts with CTNNB1. Interacts with GRIN2B. Interacts with DLG4 and CDH2. Interacts with GPHN. Post-translationally, isoform 2 is phosphorylated on multiple tyrosine residues by FYN. Phosphorylated tyrosine residues undergo dephosphorylation after stimulation of NMDA receptors. Phosphorylated in vitro by CaMK2 in the presence of calmodulin and calcium; which inhibits GAP activity. As to expression, isoform 1 and isoform 2 are highly expressed in brain and testis. Isoform 1 is also expressed in other tissues such as lung, liver and spleen.

It localises to the postsynaptic density. The protein localises to the cell projection. Its subcellular location is the dendritic spine. The protein resides in the cytoplasm. It is found in the cell cortex. It localises to the endosome membrane. The protein localises to the golgi apparatus membrane. Its subcellular location is the endoplasmic reticulum membrane. The protein resides in the membrane. GTPase-activating protein (GAP) promoting GTP hydrolysis on RHOA, CDC42 and RAC1 small GTPases. May be involved in the differentiation of neuronal cells during the formation of neurite extensions. Involved in NMDA receptor activity-dependent actin reorganization in dendritic spines. May mediate cross-talks between Ras- and Rho-regulated signaling pathways in cell growth regulation. Isoform 2 has higher GAP activity. This Homo sapiens (Human) protein is Rho GTPase-activating protein 32 (ARHGAP32).